Reading from the N-terminus, the 357-residue chain is Metacaspase-3 (357 aa).

His168 is an active-site residue. Ca(2+) is bound by residues Asp183, Asp199, and Asp200. Residue Cys223 is part of the active site. Asp230 is a Ca(2+) binding site.

Belongs to the peptidase C14B family.

Its subcellular location is the recycling endosome. With respect to regulation, activated by Ca(2+). Cysteine protease that cleaves specifically after arginine or lysine residues. In the bloodstream form, may cleave inactive metacaspase-4 MCA4 prior to MCA4 secretion. The sequence is that of Metacaspase-3 from Trypanosoma brucei brucei.